A 241-amino-acid chain; its full sequence is Glutathione S-transferase omega-1 (241 aa).

The residue at position 2 (Ser2) is an N-acetylserine. Residues 22–101 form the GST N-terminal domain; the sequence is GLIRVYSMRF…YLDEAYPGKK (80 aa). Cys32 acts as the Nucleophile in catalysis. Residue Lys57 is modified to N6-acetyllysine. Glutathione contacts are provided by residues Lys59, Val72, and 85–86; that span reads ES. The GST C-terminal domain maps to 106-225; it reads DPYEKACQKM…HIEPRDLRAF (120 aa). N6-acetyllysine occurs at positions 143, 148, and 152.

Homodimer. Most abundant in the liver and skeletal muscle; also expressed in heart, diaphragm, colon, thymus, kidney, lung, ovaries, spleen, intestine and pancreas.

It localises to the cytoplasm. The protein localises to the cytosol. The catalysed reaction is RX + glutathione = an S-substituted glutathione + a halide anion + H(+). It carries out the reaction L-dehydroascorbate + 2 glutathione = glutathione disulfide + L-ascorbate. The enzyme catalyses methylarsonate + 2 glutathione + H(+) = methylarsonous acid + glutathione disulfide + H2O. In terms of biological role, exhibits glutathione-dependent thiol transferase and dehydroascorbate reductase activities. Has S-(phenacyl)glutathione reductase activity. Also has glutathione S-transferase activity. Participates in the biotransformation of inorganic arsenic and reduces monomethylarsonic acid (MMA) and dimethylarsonic acid. The chain is Glutathione S-transferase omega-1 (GSTO1) from Sus scrofa (Pig).